The chain runs to 264 residues: Probable membrane transporter protein HI_0902 (264 aa).

9 helical membrane-spanning segments follow: residues 4 to 24 (FILL…LFGI), 28 to 48 (LVIV…ESLL), 49 to 69 (MSTA…GSAQ), 81 to 101 (AVRI…LFIG), 107 to 127 (ISAK…VLSI), 147 to 167 (ILIG…IVPF), 183 to 203 (AFCG…SGWG), 210 to 230 (YSLG…SFFT), and 243 to 263 (VSTL…NMFL).

This sequence belongs to the 4-toluene sulfonate uptake permease (TSUP) (TC 2.A.102) family.

It localises to the cell membrane. This chain is Probable membrane transporter protein HI_0902, found in Haemophilus influenzae (strain ATCC 51907 / DSM 11121 / KW20 / Rd).